We begin with the raw amino-acid sequence, 58 residues long: UPF0339 protein TDE_0826 (58 aa).

The protein belongs to the UPF0339 family.

In Treponema denticola (strain ATCC 35405 / DSM 14222 / CIP 103919 / JCM 8153 / KCTC 15104), this protein is UPF0339 protein TDE_0826.